Here is a 476-residue protein sequence, read N- to C-terminus: MNSAPLSTPAPVTLPVRSIPGSYGLPLVGPIADRLDYFWFQKPENFFTKRMEKHKSTVFRTNVPPCFPFFGSVNPNVVAVLDVKSFSHLFDMEIVEKANVLVGDFMPSVVYTGDMRVCAYLDTSEPKHAQIKNFSQDILKRGSKTWVPTLLKELDTMFTTFEADLSKSNTASLLPALQKFLFNFFSLTILGADPSVSPEIANSGYIFLDSWLAIQLAPTVSIGVLQPLEEILVHSFAYPFFLVKGNYEKLVQFVKNEAKEVLSRAQTEFQLTEQEAIHNLLFILGFNAFGGFSIFLPTLLGNLGDEKNADMQEKLRKEVRDKVGVNPENLSFESVKEMELVQSFVYETLRLSPPVPSQYARARKDFKLSSHDSVYEIKKGELLCGYQPLVMKDPKVFDEPEKFVLERFTKEKGKELLNYLFWSNGPQTGRPTESNKQCAAKDMVTLTASLIVAYIFQKYDSVSFSSGSLTSVKKAS.

A helical membrane pass occupies residues 280–300; the sequence is LLFILGFNAFGGFSIFLPTLL. Heme is bound at residue C438.

Belongs to the cytochrome P450 family. It depends on heme as a cofactor. In terms of tissue distribution, highly expressed in developing flowers and in young leaves. Detected in stems and immature green fruits, but not in mature green and red fruits.

The protein localises to the plastid. The protein resides in the chloroplast outer membrane. Reversibly inhibited by nordihydroguaiaretic acid (NDGA) and irreversibly by salicylic acid. Functionally, cytochrome P450 of the CYP74B subfamily involved in the biosynthesis of traumatin and C6 aldehydes. Metabolizes 13- but not 9-hydroperoxides of linoleic and linolenic acids. Can use 15S-hydroperoxy-11(Z),13(E),17(Z)-eicosatrienoic acid (15-HPET) and 13S-hydroperoxy-9(Z),11(E),15(Z)-octadecatrienoic acid (13-HPOT) as substrates, but only 5% activity with 13S-hydroperoxy-9(Z),11(E)-octadecadienoic acid (13-HPOD). Produces n-hexanal and 12-oxo-9(Z)-dodecanoic acid from 13-HPOD. This is Fatty acid hydroperoxide lyase, chloroplastic from Solanum lycopersicum (Tomato).